Here is a 282-residue protein sequence, read N- to C-terminus: NADPH-dependent 7-cyano-7-deazaguanine reductase (282 aa).

88–90 (IES) is a binding site for substrate. 90-91 (SK) contributes to the NADPH binding site. The active-site Thioimide intermediate is Cys-190. Asp-197 functions as the Proton donor in the catalytic mechanism. Residue 229–230 (HE) participates in substrate binding. 258 to 259 (RG) is a binding site for NADPH.

The protein belongs to the GTP cyclohydrolase I family. QueF type 2 subfamily. In terms of assembly, homodimer.

It localises to the cytoplasm. It carries out the reaction 7-aminomethyl-7-carbaguanine + 2 NADP(+) = 7-cyano-7-deazaguanine + 2 NADPH + 3 H(+). It functions in the pathway tRNA modification; tRNA-queuosine biosynthesis. Its function is as follows. Catalyzes the NADPH-dependent reduction of 7-cyano-7-deazaguanine (preQ0) to 7-aminomethyl-7-deazaguanine (preQ1). In Escherichia coli O81 (strain ED1a), this protein is NADPH-dependent 7-cyano-7-deazaguanine reductase.